Here is a 238-residue protein sequence, read N- to C-terminus: Ribitol-5-phosphate cytidylyltransferase 1 (238 aa).

CTP is bound by residues leucine 7–glycine 10 and glycine 81–threonine 87.

This sequence belongs to the IspD/TarI cytidylyltransferase family. TarI subfamily.

It carries out the reaction D-ribitol 5-phosphate + CTP + H(+) = CDP-L-ribitol + diphosphate. It participates in cell wall biogenesis; poly(ribitol phosphate) teichoic acid biosynthesis. In terms of biological role, catalyzes the transfer of the cytidylyl group of CTP to D-ribitol 5-phosphate. The protein is Ribitol-5-phosphate cytidylyltransferase 1 of Staphylococcus aureus (strain USA300).